Here is a 64-residue protein sequence, read N- to C-terminus: Large ribosomal subunit protein bL35 (64 aa).

Positions 1–21 are disordered; sequence MPKMKTNRGAAKRFKVKKSGK. Residues 10-21 are compositionally biased toward basic residues; sequence AAKRFKVKKSGK.

The protein belongs to the bacterial ribosomal protein bL35 family.

The chain is Large ribosomal subunit protein bL35 from Nautilia profundicola (strain ATCC BAA-1463 / DSM 18972 / AmH).